A 243-amino-acid chain; its full sequence is Urease accessory protein UreF 2 (243 aa).

The protein belongs to the UreF family. As to quaternary structure, ureD, UreF and UreG form a complex that acts as a GTP-hydrolysis-dependent molecular chaperone, activating the urease apoprotein by helping to assemble the nickel containing metallocenter of UreC. The UreE protein probably delivers the nickel.

It is found in the cytoplasm. In terms of biological role, required for maturation of urease via the functional incorporation of the urease nickel metallocenter. The protein is Urease accessory protein UreF 2 of Brucella suis (strain ATCC 23445 / NCTC 10510).